Reading from the N-terminus, the 293-residue chain is Hydroxyquinol 1,2-dioxygenase (293 aa).

Positions 164, 197, 221, and 223 each coordinate Fe cation.

It belongs to the intradiol ring-cleavage dioxygenase family. Homodimer. Fe(3+) serves as cofactor.

The enzyme catalyses benzene-1,2,4-triol + O2 = maleylacetate + 2 H(+). The protein operates within aromatic compound metabolism; beta-ketoadipate pathway; 3-oxoadipate from 3,4-dihydroxybenzoate: step 2/4. Its activity is regulated as follows. Inhibited by 3,5-dichlorocatechol, chlorohydroquinone and 4,5-dibromocatechol. Catalyzes the ortho-cleavage of the aromatic ring of hydroxyquinol. The polypeptide is Hydroxyquinol 1,2-dioxygenase (chqB) (Nocardioides simplex (Arthrobacter simplex)).